A 300-amino-acid polypeptide reads, in one-letter code: MKIVVGSRGSKLALTQTNWVIDKIKQKYPQIQFEVKIISTKGDRIQHIALDKIGDKGLFVKEIEEQLISGDIDMAVHSMKDMSTEMPEELKFSYVPKREDYRDVLILNKKYNSIDELPMNAKIGTGSKRRKYQLLQYRDDLNIVPIRGNVETRINKIEMENLHGVVLASAGIKRLNIQEKLDYNIFYLNEDIMLPSPAQGILALEIRKDREDLEEILKSIEDKNSSIQAVAERAFLKGVNGGCHVPIGAICNINKDNVELTGLLGKEDGSKIIRKSLGGKIEDAEKIGYELAEIVLKEIN.

An S-(dipyrrolylmethanemethyl)cysteine modification is found at cysteine 243.

It belongs to the HMBS family. In terms of assembly, monomer. The cofactor is dipyrromethane.

It carries out the reaction 4 porphobilinogen + H2O = hydroxymethylbilane + 4 NH4(+). It participates in porphyrin-containing compound metabolism; protoporphyrin-IX biosynthesis; coproporphyrinogen-III from 5-aminolevulinate: step 2/4. In terms of biological role, tetrapolymerization of the monopyrrole PBG into the hydroxymethylbilane pre-uroporphyrinogen in several discrete steps. This Clostridium novyi (strain NT) protein is Porphobilinogen deaminase.